The sequence spans 137 residues: Large ribosomal subunit protein uL16 (137 aa).

The protein belongs to the universal ribosomal protein uL16 family. In terms of assembly, part of the 50S ribosomal subunit.

Binds 23S rRNA and is also seen to make contacts with the A and possibly P site tRNAs. The sequence is that of Large ribosomal subunit protein uL16 from Bradyrhizobium sp. (strain ORS 278).